Reading from the N-terminus, the 176-residue chain is RNA 2',3'-cyclic phosphodiesterase (176 aa).

His-39 functions as the Proton donor in the catalytic mechanism. 2 consecutive short sequence motifs (HXTX) follow at residues 39 to 42 and 122 to 125; these read HITL and HLTV. His-122 serves as the catalytic Proton acceptor.

The protein belongs to the 2H phosphoesterase superfamily. ThpR family.

It carries out the reaction a 3'-end 2',3'-cyclophospho-ribonucleotide-RNA + H2O = a 3'-end 2'-phospho-ribonucleotide-RNA + H(+). Its function is as follows. Hydrolyzes RNA 2',3'-cyclic phosphodiester to an RNA 2'-phosphomonoester. This is RNA 2',3'-cyclic phosphodiesterase from Archaeoglobus fulgidus (strain ATCC 49558 / DSM 4304 / JCM 9628 / NBRC 100126 / VC-16).